Reading from the N-terminus, the 340-residue chain is Ferrochelatase (340 aa).

2 residues coordinate Fe cation: histidine 189 and glutamate 292.

Belongs to the ferrochelatase family.

Its subcellular location is the cytoplasm. It catalyses the reaction heme b + 2 H(+) = protoporphyrin IX + Fe(2+). It participates in porphyrin-containing compound metabolism; protoheme biosynthesis; protoheme from protoporphyrin-IX: step 1/1. In terms of biological role, catalyzes the ferrous insertion into protoporphyrin IX. The sequence is that of Ferrochelatase from Pseudomonas aeruginosa (strain LESB58).